Consider the following 102-residue polypeptide: Small ribosomal subunit protein uS10c (102 aa).

The protein belongs to the universal ribosomal protein uS10 family. Part of the 30S ribosomal subunit.

Its subcellular location is the plastid. It is found in the chloroplast. Its function is as follows. Involved in the binding of tRNA to the ribosomes. This chain is Small ribosomal subunit protein uS10c, found in Guillardia theta (Cryptophyte).